The chain runs to 162 residues: N5-carboxyaminoimidazole ribonucleotide mutase (162 aa).

Substrate is bound by residues serine 11, aspartate 14, and arginine 41.

This sequence belongs to the AIR carboxylase family. Class I subfamily.

It catalyses the reaction 5-carboxyamino-1-(5-phospho-D-ribosyl)imidazole + H(+) = 5-amino-1-(5-phospho-D-ribosyl)imidazole-4-carboxylate. Its pathway is purine metabolism; IMP biosynthesis via de novo pathway; 5-amino-1-(5-phospho-D-ribosyl)imidazole-4-carboxylate from 5-amino-1-(5-phospho-D-ribosyl)imidazole (N5-CAIR route): step 2/2. Functionally, catalyzes the conversion of N5-carboxyaminoimidazole ribonucleotide (N5-CAIR) to 4-carboxy-5-aminoimidazole ribonucleotide (CAIR). The polypeptide is N5-carboxyaminoimidazole ribonucleotide mutase (Bacillus subtilis (strain 168)).